Here is a 500-residue protein sequence, read N- to C-terminus: Probable lipoprotein aminopeptidase LpqL (500 aa).

A signal peptide spans Met1 to Gly24. The N-palmitoyl cysteine moiety is linked to residue Cys25. Cys25 carries the S-diacylglycerol cysteine lipid modification. One can recognise a PA domain in the interval Val140–Arg231. Positions 271 and 283 each coordinate Zn(2+). Residue Glu316 is the Proton acceptor of the active site. Residues Glu317, Asp345, and His448 each contribute to the Zn(2+) site.

It belongs to the peptidase M28 family. M28A subfamily. The cofactor is Zn(2+). Modified by Lgt on Cys-25 with an S-linked diacylglycerol with a mixture of C16 and C19 fatty acids (palmitic and tuberculostearic acid), signal peptide is removed by LspA, modified by Lnt with an amide-linked mixture of C16 and C19 fatty acids, expressed in M.bovis.

The protein localises to the cell membrane. The catalysed reaction is Release of an N-terminal amino acid, Xaa-|-Yaa-, in which Xaa is preferably Leu, but may be other amino acids including Pro although not Arg or Lys, and Yaa may be Pro. Amino acid amides and methyl esters are also readily hydrolyzed, but rates on arylamides are exceedingly low.. Its function is as follows. An aminopeptidase; acts on free N-terminal amino groups with a very strong preference for Leu in the first position. This is Probable lipoprotein aminopeptidase LpqL (lpqL) from Mycobacterium tuberculosis (strain ATCC 25618 / H37Rv).